Here is a 221-residue protein sequence, read N- to C-terminus: Vesicle transport v-SNARE 11 (221 aa).

The residue at position 2 (serine 2) is an N-acetylserine. The Cytoplasmic segment spans residues 2–198; sequence SDVFDGYERQ…MTRRMNKNKW (197 aa). Residues 32-93 adopt a coiled-coil conformation; sequence EQKKQKLSEI…FKTEVKRITS (62 aa). A helical; Anchor for type IV membrane protein membrane pass occupies residues 199–219; that stretch reads TIGAIIIALIAAIFIILYFKL. Residues 220-221 lie on the Vesicular side of the membrane; it reads TK.

It belongs to the VTI1 family. Forms SNARE complexes with the t-SNAREs SYP51 and either SYP21 or SYP22 in the PVC, and with a much lower affinity with SYP61 in the TGN. Does not interact with SYP41, SYP42 or VPS45. Binds to EPSIN1. Interacts with SCYL2B. Expressed in roots, stems, flowers and leaves.

The protein resides in the golgi apparatus. It localises to the trans-Golgi network membrane. The protein localises to the prevacuolar compartment membrane. Its subcellular location is the vacuole membrane. In terms of biological role, functions as a v-SNARE responsible for targeting AtELP-containing vesicles from the trans-Golgi network (TGN) to the prevacuolar compartment (PVC) and mediates liposome fusion. May be also involved in retrograde traffic to the cis-Golgi. Promotes the formation of vacuolar membrane 'bulbs'. Necessary to deliver proteins to the lytic vacuole, but seems not involved in storage proteins transport. Required for amyloplast sedimentation in the endodermis during shoot gravitropism, which are thus acting as statoliths. Expression in the endodermis is essential for the shoot gravitropic response, whereas expression in other tissues may be responsible for the correct stem and leaf shape. This Arabidopsis thaliana (Mouse-ear cress) protein is Vesicle transport v-SNARE 11.